We begin with the raw amino-acid sequence, 335 residues long: Geranylgeranyl pyrophosphate synthase BTS1 (335 aa).

3 residues coordinate isopentenyl diphosphate: lysine 36, arginine 39, and histidine 68. Residues aspartate 75 and aspartate 79 each coordinate Mg(2+). Position 84 (arginine 84) interacts with dimethylallyl diphosphate. Arginine 85 contacts isopentenyl diphosphate. Dimethylallyl diphosphate-binding residues include lysine 169, threonine 170, glutamine 206, asparagine 213, lysine 223, and lysine 233.

This sequence belongs to the FPP/GGPP synthase family. Mg(2+) serves as cofactor.

The protein localises to the cytoplasm. The catalysed reaction is isopentenyl diphosphate + dimethylallyl diphosphate = (2E)-geranyl diphosphate + diphosphate. The enzyme catalyses isopentenyl diphosphate + (2E)-geranyl diphosphate = (2E,6E)-farnesyl diphosphate + diphosphate. It catalyses the reaction isopentenyl diphosphate + (2E,6E)-farnesyl diphosphate = (2E,6E,10E)-geranylgeranyl diphosphate + diphosphate. The protein operates within isoprenoid biosynthesis; farnesyl diphosphate biosynthesis; farnesyl diphosphate from geranyl diphosphate and isopentenyl diphosphate: step 1/1. Its pathway is isoprenoid biosynthesis; geranyl diphosphate biosynthesis; geranyl diphosphate from dimethylallyl diphosphate and isopentenyl diphosphate: step 1/1. It participates in isoprenoid biosynthesis; geranylgeranyl diphosphate biosynthesis; geranylgeranyl diphosphate from farnesyl diphosphate and isopentenyl diphosphate: step 1/1. Catalyzes the trans-addition of the 3 molecules of IPP onto DMAPP to form geranylgeranyl pyrophosphate. Required for the membrane attachment of YPT1 and SEC4. May be involved in vesicle trafficking and protein sorting. The protein is Geranylgeranyl pyrophosphate synthase BTS1 (BTS1) of Saccharomyces cerevisiae (strain ATCC 204508 / S288c) (Baker's yeast).